A 210-amino-acid chain; its full sequence is Large ribosomal subunit protein uL3 (210 aa).

The interval Arg125 to Pro151 is disordered.

It belongs to the universal ribosomal protein uL3 family. In terms of assembly, part of the 50S ribosomal subunit. Forms a cluster with proteins L14 and L19.

Functionally, one of the primary rRNA binding proteins, it binds directly near the 3'-end of the 23S rRNA, where it nucleates assembly of the 50S subunit. The protein is Large ribosomal subunit protein uL3 of Bacillus cereus (strain Q1).